The chain runs to 453 residues: Ankyrin repeat and SOCS box protein 16 (453 aa).

ANK repeat units lie at residues 56 to 85 (CRDPAVHNALFSGDLQQLQILFQDEDAANM), 110 to 139 (KQTAPLTIAVARGYTDCARHLILQGAELDA), 142 to 171 (GGRAALHEACAQAHPDCVRLLLTFGAKANV), 175 to 204 (EGMTPLHLCTSPESLQCAKLLLEAGASVNV), 209 to 238 (SEVTPLHVAAARGLEQHVALYLQNGADVAL), 242 to 279 (QGETALNAACAGAEGPGSSRQHEAAARQLLEAGADPQA), and 283 to 312 (KRHTPLHNACANGCGGLAELLLRHGASPGV). Residues 397–453 (FYSSALSMENQPRQLQHLARLAVRAQLGSHCRQAAAQLPLPPLLRDYLLLGVEGRIQ) form the SOCS box domain.

This sequence belongs to the ankyrin SOCS box (ASB) family.

The protein operates within protein modification; protein ubiquitination. May be a substrate-recognition component of a SCF-like ECS (Elongin-Cullin-SOCS-box protein) E3 ubiquitin-protein ligase complex which mediates the ubiquitination and subsequent proteasomal degradation of target proteins. The protein is Ankyrin repeat and SOCS box protein 16 (Asb16) of Mus musculus (Mouse).